We begin with the raw amino-acid sequence, 427 residues long: Peptidase B (427 aa).

Lys-195 and Asp-200 together coordinate Mn(2+). Residue Lys-207 is part of the active site. Residues Asp-218, Asp-277, and Glu-279 each contribute to the Mn(2+) site. Arg-281 is an active-site residue.

This sequence belongs to the peptidase M17 family. Homohexamer. Requires Mn(2+) as cofactor.

It localises to the cytoplasm. The catalysed reaction is Release of an N-terminal amino acid, Xaa, from a peptide or arylamide. Xaa is preferably Glu or Asp but may be other amino acids, including Leu, Met, His, Cys and Gln.. Functionally, probably plays an important role in intracellular peptide degradation. This chain is Peptidase B, found in Salmonella dublin (strain CT_02021853).